The following is a 507-amino-acid chain: Maturase K (507 aa).

Belongs to the intron maturase 2 family. MatK subfamily.

The protein resides in the plastid. It is found in the chloroplast. In terms of biological role, usually encoded in the trnK tRNA gene intron. Probably assists in splicing its own and other chloroplast group II introns. The sequence is that of Maturase K from Browningia hertlingiana (Cactus).